Consider the following 527-residue polypeptide: EGF domain-specific O-linked N-acetylglucosamine transferase (527 aa).

Residues 1–17 (MFMLLVFGALLPEVPLS) form the signal peptide. The short motif at 295–297 (DYD) is the Required for optimal activity element. N354 is a glycosylation site (N-linked (GlcNAc...) asparagine). Residues 524–527 (HDEL) carry the Prevents secretion from ER motif.

The protein belongs to the glycosyltransferase 61 family.

The protein resides in the endoplasmic reticulum lumen. The catalysed reaction is L-seryl-[protein] + UDP-N-acetyl-alpha-D-glucosamine = 3-O-(N-acetyl-beta-D-glucosaminyl)-L-seryl-[protein] + UDP + H(+). The enzyme catalyses L-threonyl-[protein] + UDP-N-acetyl-alpha-D-glucosamine = 3-O-(N-acetyl-beta-D-glucosaminyl)-L-threonyl-[protein] + UDP + H(+). In terms of biological role, catalyzes the transfer of a single N-acetylglucosamine from UDP-GlcNAc to a serine or threonine residue in extracellular proteins resulting in their modification with a beta-linked N-acetylglucosamine (O-GlcNAc). Specifically glycosylates the Thr residue located between the fifth and sixth conserved cysteines of folded EGF-like domains. This Bos taurus (Bovine) protein is EGF domain-specific O-linked N-acetylglucosamine transferase (EOGT).